The chain runs to 406 residues: MTGCSPVFAMQHVVGVPRILVRRTFLGTDVTMTRTLCSPGPREKRPEAAALGLFHRLPELGRTLSHTVRHQAASTAKAWWDRYEEFVGLNEVREAQGNVTEAEKVFMVARGLVREAREGLEAQQTKLKEVRDRLDRVSREDNQYLELATLEHRMLQEEKRLRIAYLRAEDSEREKFSLFSAAVRESHEKERTRAERTKNWSLIGSVLGALIGVAGSTYVNRVRLQELKALLLEAQKGPASLQEAIREQASSYSLQQKDLQDLMMDLRGLVHAEQGQGSGSPTGSSTRGKDIDGLSATMKEQLRHSRQVYSCLEGLREQLDGLEKTCSQMAGVLQLAQAPAHPGTVGPVDGALPSSLLEHGSVILALSEMEQRLEAQANRNTVSSTLVTCVTFLATLPLLYMLFKTS.

The transit peptide at methionine 1 to threonine 35 directs the protein to the mitochondrion. Over leucine 36–lysine 198 the chain is Mitochondrial matrix. The stretch at valine 113–glutamate 140 forms a coiled coil. The helical transmembrane segment at asparagine 199 to valine 219 threads the bilayer. At asparagine 220–valine 382 the chain is on the mitochondrial intermembrane side. The chain crosses the membrane as a helical span at residues serine 383–phenylalanine 403. Over lysine 404 to serine 406 the chain is Mitochondrial matrix.

The mitochondrial potassium channel (mitoK(ATP)) is composed of 4 subunits of CCDC51/MITOK and 4 subunits of ABCB8/MITOSUR.

It is found in the mitochondrion inner membrane. The catalysed reaction is K(+)(in) = K(+)(out). Its activity is regulated as follows. Inhibited by ATP via mitoK(ATP) channel. Its function is as follows. Pore-forming subunit of the mitochondrial ATP-gated potassium channel (mitoK(ATP)). Together with ATP-binding subunit ABCB8/MITOSUR of the mitoK(ATP) channel, mediates ATP-dependent K(+) currents across the mitochondrial inner membrane. An increase in ATP intracellular levels closes the channel, inhibiting K(+) transport, whereas a decrease in ATP levels enhances K(+) uptake in the mitochondrial matrix. May contribute to the homeostatic control of cellular metabolism under stress conditions by regulating the mitochondrial matrix volume. The protein is Mitochondrial potassium channel of Mus musculus (Mouse).